Reading from the N-terminus, the 504-residue chain is MEKFQGYLEFDGARQQSFLYPLFFREYIYVLAYDHGLNRLNRNRSILFENVDYEKKYSSLIVKRLILRMYEQNRLIIPTKNLNQNYFFGHTSLFYYQMISVLFAVIVEIPFSLRLGSSFEGKQLKKSYNLQSIHSIFPFLEDKLSHFNYVLDVVIPYPIHLEILVQTLRYRVKDASSLHFFRFCLYEYCNWKDFSIKKKSILNPRFFLFLYNSHVCEYESIFFFLRKRSSHLRSTSYEVLFERILFYGKIQHFFKVFVKNFPAILGLLKDPLIHYVRYHGRCILATKDTPLLMNKWKYYFVNLWQCYFSVWFQSQKVNINQLSKDNLEFLGYLSSLRLNPLVVRSQMLENSFLIDNVRIKLDSKIPISSIIGSLAKDKFCNVLGHPISKAVWTDSSDSDILNRFVRISRNISHYYSGSSKKKNLYRIKYILRLCCVKTLARKHKSTVRAFLKRLGSGLLEEFLTGEDQVLSLIFPRSYYASKRLYRVRIWYLDILYLNDLVNHE.

The protein belongs to the intron maturase 2 family. MatK subfamily.

Its subcellular location is the plastid. The protein resides in the chloroplast. Functionally, usually encoded in the trnK tRNA gene intron. Probably assists in splicing its own and other chloroplast group II introns. The sequence is that of Maturase K from Barbarea vulgaris (Yellow rocket).